We begin with the raw amino-acid sequence, 526 residues long: MSINRISKNELLANYDTFLFDADGVLWTGDIPVPGAIEWINLLLEDPSKKVFVLTNNSTKTLEQYMKKIEKLGFGHLGRNNVISPAIVLADYLKSNADKFSGEYVYLIGTENLKATLENDGGVKCFGTGPDSIRDHTDGDFIHKVDMSIAPKAVVCSYDAHFSYPKIMKASNYLQDPSVEYLVTNQDYTFPGPVPGVVIPGSGATSAAVTAVTGRDPKVFGKPHKPMADFLLRRAHVDPKRTVMFGDRLDTDIMFGNANGQLSATPIQCQNESENSEPQKQGWISRLLKGQSMDPSSWQKQSHSSLLSNSELMYEFMTHNYRPGEQDAYLDAFGKYKNEMNQKNPSIELVGSWTCAYGRTRDQAIHLWRHNKGYEDVDSSISLHGKDSGIRAADNDVAKLCGRRKNLIVKSFSYWREPEQRPPNHVYDLRSYVLQPGTMIDWASAWAKGIQYRREANQDVGGFFAQVGQLYVVYHIWAYPSMSGRNDTRHATWAKPGWDATVANTVPLIKKMQSKILTPTKYSQLE.

It belongs to the NipSnap family.

The sequence is that of Putative NipSnap protein K02D10.1 from Caenorhabditis elegans.